The sequence spans 293 residues: Nucleotide-binding protein BCG9842_B5683 (293 aa).

Gly14–Thr21 contributes to the ATP binding site. Residue Asp65 to Gly68 participates in GTP binding.

Belongs to the RapZ-like family.

In terms of biological role, displays ATPase and GTPase activities. The sequence is that of Nucleotide-binding protein BCG9842_B5683 from Bacillus cereus (strain G9842).